Here is a 1029-residue protein sequence, read N- to C-terminus: Kinesin-like protein KIF17 (1029 aa).

The region spanning 5 to 335 (AVKVVVRCRP…LRYANRAKNI (331 aa)) is the Kinesin motor domain. 91-98 (GQTGSGKS) lines the ATP pocket. Residues 346-462 (KDALLREYQE…EENLRKETEA (117 aa)) are a coiled coil. Disordered stretches follow at residues 523-569 (ELPK…MPTE) and 647-673 (VPAPTDLLEPSDARPEAEAADDFPPRP). Over residues 532 to 551 (SEISLGSSESSSLEETSVSE) the composition is skewed to low complexity. Residues 657 to 673 (SDARPEAEAADDFPPRP) are compositionally biased toward basic and acidic residues. Residues 739-846 (QQVLARLQLL…QLEKIDYLAT (108 aa)) are a coiled coil. 2 disordered regions span residues 908-931 (AVSTGPQNKPARKTSAADNGEPNM) and 968-1029 (KSLT…SEPL).

The protein belongs to the TRAFAC class myosin-kinesin ATPase superfamily. Kinesin family. As to quaternary structure, homodimer. Interacts with APBA1 (via PDZ domain); the interaction is direct and is required for association of KIF17 with the cargo that is to be transported. Interacts with IFT B complex components IFT52 and IFT57. Interacts with IFT70B. Interacts with PIWIL1. Interacts with TBATA.

Its subcellular location is the cytoplasm. It is found in the cytoskeleton. It localises to the cell projection. The protein resides in the cilium. The protein localises to the dendrite. Dendrite-specific motor protein which, in association with the Apba1-containing complex (LIN-10-LIN-2-LIN-7 complex), transports vesicles containing N-methyl-D-aspartate (NMDA) receptor subunit NR2B along microtubules. The protein is Kinesin-like protein KIF17 (KIF17) of Homo sapiens (Human).